The following is a 305-amino-acid chain: tRNA dimethylallyltransferase 1 (305 aa).

Residue 10 to 17 (GPTASGKT) participates in ATP binding. 12 to 17 (TASGKT) provides a ligand contact to substrate. The tract at residues 35-38 (DSRQ) is interaction with substrate tRNA.

The protein belongs to the IPP transferase family. Monomer. The cofactor is Mg(2+).

It carries out the reaction adenosine(37) in tRNA + dimethylallyl diphosphate = N(6)-dimethylallyladenosine(37) in tRNA + diphosphate. Functionally, catalyzes the transfer of a dimethylallyl group onto the adenine at position 37 in tRNAs that read codons beginning with uridine, leading to the formation of N6-(dimethylallyl)adenosine (i(6)A). The protein is tRNA dimethylallyltransferase 1 of Syntrophus aciditrophicus (strain SB).